We begin with the raw amino-acid sequence, 184 residues long: Acireductone dioxygenase (184 aa).

Fe(2+)-binding residues include His97, His99, Glu103, and His141. His97, His99, Glu103, and His141 together coordinate Ni(2+).

The protein belongs to the acireductone dioxygenase (ARD) family. In terms of assembly, monomer. It depends on Fe(2+) as a cofactor. Ni(2+) is required as a cofactor.

It carries out the reaction 1,2-dihydroxy-5-(methylsulfanyl)pent-1-en-3-one + O2 = 3-(methylsulfanyl)propanoate + CO + formate + 2 H(+). It catalyses the reaction 1,2-dihydroxy-5-(methylsulfanyl)pent-1-en-3-one + O2 = 4-methylsulfanyl-2-oxobutanoate + formate + 2 H(+). It functions in the pathway amino-acid biosynthesis; L-methionine biosynthesis via salvage pathway; L-methionine from S-methyl-5-thio-alpha-D-ribose 1-phosphate: step 5/6. In terms of biological role, catalyzes 2 different reactions between oxygen and the acireductone 1,2-dihydroxy-3-keto-5-methylthiopentene (DHK-MTPene) depending upon the metal bound in the active site. Fe-containing acireductone dioxygenase (Fe-ARD) produces formate and 2-keto-4-methylthiobutyrate (KMTB), the alpha-ketoacid precursor of methionine in the methionine recycle pathway. Ni-containing acireductone dioxygenase (Ni-ARD) produces methylthiopropionate, carbon monoxide and formate, and does not lie on the methionine recycle pathway. This is Acireductone dioxygenase from Parvibaculum lavamentivorans (strain DS-1 / DSM 13023 / NCIMB 13966).